Consider the following 473-residue polypeptide: Benzoyl-CoA oxygenase component B (473 aa).

Belongs to the benzoyl-CoA oxygenase component B family. In terms of assembly, monomer. The subunit composition of the active BoxA/BoxB protein complex is not known. Fe cation serves as cofactor.

It carries out the reaction benzoyl-CoA + NADPH + O2 + H(+) = 2,3-epoxy-2,3-dihydrobenzoyl-CoA + NADP(+) + H2O. Its function is as follows. The BoxA/BoxB complex catalyzes the aerobic reduction/oxygenation of the aromatic ring of benzoyl-CoA to form 2,3-epoxy-2,3-dihydrobenzoyl-CoA. BoxB acts as the benzoyl-CoA oxygenase, after being reduced by the reductase component BoxA. BoxAB does not act on NADH or benzoate. This chain is Benzoyl-CoA oxygenase component B (boxB), found in Aromatoleum evansii (Azoarcus evansii).